Consider the following 134-residue polypeptide: ATP synthase epsilon chain (134 aa).

This sequence belongs to the ATPase epsilon chain family. In terms of assembly, F-type ATPases have 2 components, CF(1) - the catalytic core - and CF(0) - the membrane proton channel. CF(1) has five subunits: alpha(3), beta(3), gamma(1), delta(1), epsilon(1). CF(0) has three main subunits: a, b and c.

The protein localises to the cell inner membrane. Functionally, produces ATP from ADP in the presence of a proton gradient across the membrane. The protein is ATP synthase epsilon chain of Nitratidesulfovibrio vulgaris (strain DSM 19637 / Miyazaki F) (Desulfovibrio vulgaris).